Here is a 244-residue protein sequence, read N- to C-terminus: UDP-2,3-diacylglucosamine hydrolase (244 aa).

Mn(2+) contacts are provided by Asp-8, His-10, Asp-41, Asn-79, and His-114. 79-80 (NR) is a binding site for substrate. Residues Asp-122, Ser-160, Asn-164, Lys-167, and His-195 each contribute to the substrate site. Mn(2+) contacts are provided by His-195 and His-197.

The protein belongs to the LpxH family. Requires Mn(2+) as cofactor.

It localises to the cell inner membrane. It catalyses the reaction UDP-2-N,3-O-bis[(3R)-3-hydroxytetradecanoyl]-alpha-D-glucosamine + H2O = 2-N,3-O-bis[(3R)-3-hydroxytetradecanoyl]-alpha-D-glucosaminyl 1-phosphate + UMP + 2 H(+). It participates in glycolipid biosynthesis; lipid IV(A) biosynthesis; lipid IV(A) from (3R)-3-hydroxytetradecanoyl-[acyl-carrier-protein] and UDP-N-acetyl-alpha-D-glucosamine: step 4/6. Hydrolyzes the pyrophosphate bond of UDP-2,3-diacylglucosamine to yield 2,3-diacylglucosamine 1-phosphate (lipid X) and UMP by catalyzing the attack of water at the alpha-P atom. Involved in the biosynthesis of lipid A, a phosphorylated glycolipid that anchors the lipopolysaccharide to the outer membrane of the cell. This Hahella chejuensis (strain KCTC 2396) protein is UDP-2,3-diacylglucosamine hydrolase.